The chain runs to 88 residues: Protein Aeq5-like1 (88 aa).

A signal peptide spans 1-20; sequence MKSVIAVLVLSLVLVNFTQA. 4 disulfide bridges follow: cysteine 29/cysteine 68, cysteine 33/cysteine 64, cysteine 40/cysteine 56, and cysteine 47/cysteine 53.

Is expressed in the ectodermal cells of gastrulae and planulae. Is also noticeable in the endoderm in late planulae. In the primary polyps, is expressed in both ectoderm (sensory neurons) and endoderm (ganglions). Is not expressed in nematocytes.

Probable neuropeptide. The protein is Protein Aeq5-like1 of Nematostella vectensis (Starlet sea anemone).